A 963-amino-acid polypeptide reads, in one-letter code: VPS35 endosomal protein-sorting factor-like (963 aa).

The interval 43–112 is disordered; sequence SKTKKVSRKG…DKDENSFVGP (70 aa). Residues 51 to 72 are compositionally biased toward low complexity; it reads KGSTSSTSSSSSSSVIDPLSSV. At Ser265 the chain carries Phosphoserine. A helical membrane pass occupies residues 699–719; it reads AFVRACVAYCFITIPSLVGIF.

It belongs to the VPS35L family. As to quaternary structure, component of the heterotrimeric retriever complex formed by VPS26C, VPS29 and VPS35L. Interacts with VPS29. Interacts with COMMD1, CCDC93 and CCDC22; associates with the CCC (COMMD/CCDC22/CCDC93) complex which contains at least COMMD1 (and possibly other COMM domain-containing proteins), CCDC22 and CCDC93. Interacts with WASHC1, WASHC2A and WASHC2C. Interacts with SNX17 and SNX31.

The protein resides in the membrane. Its subcellular location is the endosome. Functionally, acts as a component of the retriever complex. The retriever complex is a heterotrimeric complex related to retromer cargo-selective complex (CSC) and essential for retromer-independent retrieval and recycling of numerous cargos such as integrin alpha-5/beta-1 (ITGA5:ITGB1). The recruitment of the retriever complex to the endosomal membrane involves CCC and WASH complexes. In the endosomes, drives the retrieval and recycling of NxxY-motif-containing cargo proteins by coupling to SNX17, a cargo essential for the homeostatic maintenance of numerous cell surface proteins associated with processes that include cell migration, cell adhesion, nutrient supply and cell signaling. Involved in copper-dependent ATP7A trafficking between the trans-Golgi network and vesicles in the cell periphery; the function is proposed to depend on its association with the CCC complex and cooperation with the WASH complex on early endosomes. Seems not to be required for CCC complex stability. This Mus musculus (Mouse) protein is VPS35 endosomal protein-sorting factor-like.